The primary structure comprises 174 residues: Large ribosomal subunit protein uL10 (174 aa).

Belongs to the universal ribosomal protein uL10 family. In terms of assembly, part of the ribosomal stalk of the 50S ribosomal subunit. The N-terminus interacts with L11 and the large rRNA to form the base of the stalk. The C-terminus forms an elongated spine to which L12 dimers bind in a sequential fashion forming a multimeric L10(L12)X complex.

Functionally, forms part of the ribosomal stalk, playing a central role in the interaction of the ribosome with GTP-bound translation factors. The polypeptide is Large ribosomal subunit protein uL10 (Anaeromyxobacter dehalogenans (strain 2CP-1 / ATCC BAA-258)).